A 292-amino-acid polypeptide reads, in one-letter code: Formamidopyrimidine-DNA glycosylase (292 aa).

Proline 2 (schiff-base intermediate with DNA) is an active-site residue. Glutamate 3 (proton donor) is an active-site residue. The active-site Proton donor; for beta-elimination activity is the lysine 60. Residues histidine 109, arginine 128, and lysine 173 each contribute to the DNA site. The segment at 258 to 292 (NVYRRTGKKCRQCKNLIERQKISGRSTHWCRKCQK) adopts an FPG-type zinc-finger fold. Arginine 282 functions as the Proton donor; for delta-elimination activity in the catalytic mechanism.

This sequence belongs to the FPG family. As to quaternary structure, monomer. It depends on Zn(2+) as a cofactor.

The enzyme catalyses Hydrolysis of DNA containing ring-opened 7-methylguanine residues, releasing 2,6-diamino-4-hydroxy-5-(N-methyl)formamidopyrimidine.. The catalysed reaction is 2'-deoxyribonucleotide-(2'-deoxyribose 5'-phosphate)-2'-deoxyribonucleotide-DNA = a 3'-end 2'-deoxyribonucleotide-(2,3-dehydro-2,3-deoxyribose 5'-phosphate)-DNA + a 5'-end 5'-phospho-2'-deoxyribonucleoside-DNA + H(+). Functionally, involved in base excision repair of DNA damaged by oxidation or by mutagenic agents. Acts as a DNA glycosylase that recognizes and removes damaged bases. Has a preference for oxidized purines, such as 7,8-dihydro-8-oxoguanine (8-oxoG). Has AP (apurinic/apyrimidinic) lyase activity and introduces nicks in the DNA strand. Cleaves the DNA backbone by beta-delta elimination to generate a single-strand break at the site of the removed base with both 3'- and 5'-phosphates. The polypeptide is Formamidopyrimidine-DNA glycosylase (Prochlorococcus marinus subsp. pastoris (strain CCMP1986 / NIES-2087 / MED4)).